The chain runs to 180 residues: Protein SPO16 homolog (180 aa).

Homooligomer. Interacts with SHOC, SYCP1 and SYCE3.

The protein resides in the chromosome. Plays a key role in reinforcing the integrity of the central element of the synaptonemal complex (SC) thereby stabilizing SC, ensuring progression of meiotic prophase I in male and female germ cells. Promotes homologous recombination and crossing-over in meiotic prophase I via its association with SHOC1. Required for the localization of TEX11 and MSH4 to recombination intermediates. The chain is Protein SPO16 homolog from Homo sapiens (Human).